The primary structure comprises 390 residues: 3-ketosteroid-9-alpha-monooxygenase, oxygenase component (390 aa).

The Rieske domain occupies 32–134 (WHCLGLLRDF…TLERNGQLYV (103 aa)). Cys-73, His-75, Cys-92, and His-95 together coordinate [2Fe-2S] cluster. Fe cation-binding residues include Asn-181, His-187, His-192, and Asp-311.

As to quaternary structure, homotrimer. The two-component system 3-ketosteroid-9-alpha-monooxygenase is composed of an oxygenase component KshA and a reductase component KshB. It depends on [2Fe-2S] cluster as a cofactor. Fe cation is required as a cofactor.

The enzyme catalyses androsta-1,4-diene-3,17-dione + 2 reduced [2Fe-2S]-[ferredoxin] + O2 + 2 H(+) = 9alpha-hydroxyandrosta-1,4-diene-3,17-dione + 2 oxidized [2Fe-2S]-[ferredoxin] + H2O. It participates in steroid metabolism; cholesterol degradation. Its function is as follows. Probably involved in the degradation of cholesterol. In vitro, catalyzes the introduction of a 9alpha-hydroxyl moiety into the ring B of 3-ketosteroid substrates such as 1,4-androstadiene-3,17-dione (ADD), 4-androstene-3,17-dione (AD), 4-androstene-17beta-ol-3-one (testosterone), 4-pregnene-3,20-dione (progesterone), 19-nor-4-androstene-3,17-dione, 1-(5alpha)-androstene-3,17-dione, 5alpha-androstane-3,17-dione, 5beta-androstane-3,17-dione, 5alpha-androstane-17beta-ol-3-one (stanolon), 11beta-hydrocortisone, 3-oxo-23,24-bisnorcholesta-4-en-22-oate (4-BNC), 23,24-bisnorcholesta-4-ene-22-oate, 3-oxo-23,24-bisnorcholesta-1,4-dien-22-oate (1,4-BNC) and 3-oxo-23,24-bisnorcholesta-1,4-dien-22-oyl-coenzyme A thioester (1,4-BNC-CoA). KshA5 has the broadest substrate range without a clear substrate preference and is active with Delta-4, Delta-1,4, 5alpha-H and 5beta-H steroids, as well as with steroids having bulky aliphatic side chains and an isopropionyl side chain at C17. The polypeptide is 3-ketosteroid-9-alpha-monooxygenase, oxygenase component (Rhodococcus rhodochrous).